We begin with the raw amino-acid sequence, 217 residues long: Deoxyribose-phosphate aldolase (217 aa).

Catalysis depends on D89, which acts as the Proton donor/acceptor. K151 acts as the Schiff-base intermediate with acetaldehyde in catalysis. K180 acts as the Proton donor/acceptor in catalysis.

This sequence belongs to the DeoC/FbaB aldolase family. DeoC type 1 subfamily.

The protein resides in the cytoplasm. It catalyses the reaction 2-deoxy-D-ribose 5-phosphate = D-glyceraldehyde 3-phosphate + acetaldehyde. The protein operates within carbohydrate degradation; 2-deoxy-D-ribose 1-phosphate degradation; D-glyceraldehyde 3-phosphate and acetaldehyde from 2-deoxy-alpha-D-ribose 1-phosphate: step 2/2. Its function is as follows. Catalyzes a reversible aldol reaction between acetaldehyde and D-glyceraldehyde 3-phosphate to generate 2-deoxy-D-ribose 5-phosphate. In Metamycoplasma arthritidis (strain 158L3-1) (Mycoplasma arthritidis), this protein is Deoxyribose-phosphate aldolase.